A 673-amino-acid chain; its full sequence is uncharacterized protein (673 aa).

The first 24 residues, 1 to 24 (MKIHNIIKIIIVVCLEGFALTSFA), serve as a signal peptide directing secretion. The next 6 membrane-spanning stretches (helical) occupy residues 224–244 (NAIGAALILYVMFFAFNMVLN), 253–273 (IALFVIKLLFVTYFSIGLGPL), 410–430 (IILISGLVFAVIFLSILLYFI), 436–456 (CMITIYVMTYVSPIFIPMMLF), 469–489 (VSLSCALQPAVVAGFIALLIT), and 562–582 (VVSILAELLCVLVFSVIFYYF). The tract at residues 624 to 673 (AQATQGKPPSSGDMPGDGGSKRSEGQKGDDSFISSGGNSSGDSLSSSGGK) is disordered. Over residues 642 to 653 (GSKRSEGQKGDD) the composition is skewed to basic and acidic residues. Low complexity predominate over residues 654–673 (SFISSGGNSSGDSLSSSGGK).

Belongs to the TrbL/VirB6 family.

The protein resides in the cell membrane. This is an uncharacterized protein from Rickettsia bellii (strain RML369-C).